Here is a 434-residue protein sequence, read N- to C-terminus: Methylenetetrahydrofolate--tRNA-(uracil-5-)-methyltransferase TrmFO (434 aa).

FAD is bound at residue 9–14 (GAGLAG).

It belongs to the MnmG family. TrmFO subfamily. Requires FAD as cofactor.

It localises to the cytoplasm. It catalyses the reaction uridine(54) in tRNA + (6R)-5,10-methylene-5,6,7,8-tetrahydrofolate + NADH + H(+) = 5-methyluridine(54) in tRNA + (6S)-5,6,7,8-tetrahydrofolate + NAD(+). The enzyme catalyses uridine(54) in tRNA + (6R)-5,10-methylene-5,6,7,8-tetrahydrofolate + NADPH + H(+) = 5-methyluridine(54) in tRNA + (6S)-5,6,7,8-tetrahydrofolate + NADP(+). Functionally, catalyzes the folate-dependent formation of 5-methyl-uridine at position 54 (M-5-U54) in all tRNAs. This chain is Methylenetetrahydrofolate--tRNA-(uracil-5-)-methyltransferase TrmFO, found in Listeria monocytogenes serovar 1/2a (strain ATCC BAA-679 / EGD-e).